The following is a 488-amino-acid chain: UDP-N-acetylmuramate--L-alanine ligase (488 aa).

Residue 129–135 coordinates ATP; it reads GSHGKTT.

This sequence belongs to the MurCDEF family.

It is found in the cytoplasm. The catalysed reaction is UDP-N-acetyl-alpha-D-muramate + L-alanine + ATP = UDP-N-acetyl-alpha-D-muramoyl-L-alanine + ADP + phosphate + H(+). It participates in cell wall biogenesis; peptidoglycan biosynthesis. Cell wall formation. The sequence is that of UDP-N-acetylmuramate--L-alanine ligase from Prochlorococcus marinus (strain MIT 9313).